The chain runs to 120 residues: Cell cycle protein GpsB (120 aa).

Residues 32 to 68 (LDDIIKDYETYAALVKELREENRRLKEELAAKPVEKA) adopt a coiled-coil conformation. The segment at 63 to 88 (KPVEKAPVQPTQPVQSTQATQSTVES) is disordered. Low complexity predominate over residues 68–86 (APVQPTQPVQSTQATQSTV).

The protein belongs to the GpsB family. In terms of assembly, forms polymers through the coiled coil domains. Interacts with PBP1, MreC and EzrA.

The protein localises to the cytoplasm. Its function is as follows. Divisome component that associates with the complex late in its assembly, after the Z-ring is formed, and is dependent on DivIC and PBP2B for its recruitment to the divisome. Together with EzrA, is a key component of the system that regulates PBP1 localization during cell cycle progression. Its main role could be the removal of PBP1 from the cell pole after pole maturation is completed. Also contributes to the recruitment of PBP1 to the division complex. Not essential for septum formation. This chain is Cell cycle protein GpsB, found in Streptococcus sanguinis (strain SK36).